The primary structure comprises 113 residues: Flagellar hook-basal body complex protein FliE (113 aa).

The protein belongs to the FliE family.

The protein resides in the bacterial flagellum basal body. In Rhizobium etli (strain ATCC 51251 / DSM 11541 / JCM 21823 / NBRC 15573 / CFN 42), this protein is Flagellar hook-basal body complex protein FliE.